The sequence spans 1154 residues: Chromosome partition protein Smc (1154 aa).

32–39 is an ATP binding site; it reads PNGCGKSN. Coiled-coil stretches lie at residues 170-215, 282-505, and 627-993; these read VAGL…ARQA, LREA…LNGE, and AARR…EARE.

The protein belongs to the SMC family. As to quaternary structure, homodimer.

It localises to the cytoplasm. Functionally, required for chromosome condensation and partitioning. The chain is Chromosome partition protein Smc from Rhodopseudomonas palustris (strain ATCC BAA-98 / CGA009).